The sequence spans 699 residues: NAD(P)H-quinone oxidoreductase subunit 5, chloroplastic (699 aa).

15 consecutive transmembrane segments (helical) span residues 1–21, 32–52, 81–101, 117–137, 139–159, 177–197, 216–236, 250–270, 272–292, 319–339, 346–366, 388–408, 417–437, 539–559, and 598–618; these read WIIP…LLLF, WAFP…NLSI, IDPL…TVLI, FAYM…SNLI, IYIF…FWFT, GDFG…SFEF, LFVT…SAQF, TPIS…FLVA, LLPL…IGII, LGYM…FHLI, ALLF…VGYS, ISFL…CFWS, WLYS…TAFY, LFPL…GISF, and IFSV…YKPI.

The protein belongs to the complex I subunit 5 family. As to quaternary structure, NDH is composed of at least 16 different subunits, 5 of which are encoded in the nucleus.

It localises to the plastid. It is found in the chloroplast thylakoid membrane. The catalysed reaction is a plastoquinone + NADH + (n+1) H(+)(in) = a plastoquinol + NAD(+) + n H(+)(out). It catalyses the reaction a plastoquinone + NADPH + (n+1) H(+)(in) = a plastoquinol + NADP(+) + n H(+)(out). In terms of biological role, NDH shuttles electrons from NAD(P)H:plastoquinone, via FMN and iron-sulfur (Fe-S) centers, to quinones in the photosynthetic chain and possibly in a chloroplast respiratory chain. The immediate electron acceptor for the enzyme in this species is believed to be plastoquinone. Couples the redox reaction to proton translocation, and thus conserves the redox energy in a proton gradient. The sequence is that of NAD(P)H-quinone oxidoreductase subunit 5, chloroplastic (ndhF) from Digitalis grandiflora (Yellow foxglove).